We begin with the raw amino-acid sequence, 107 residues long: Flagellar hook-basal body complex protein FliE (107 aa).

This sequence belongs to the FliE family.

The protein resides in the bacterial flagellum basal body. The sequence is that of Flagellar hook-basal body complex protein FliE from Mesorhizobium japonicum (strain LMG 29417 / CECT 9101 / MAFF 303099) (Mesorhizobium loti (strain MAFF 303099)).